Consider the following 301-residue polypeptide: Ribosome-inactivating protein (301 aa).

Residues 1 to 16 (MAEITLEPSDLMAQTN) constitute a propeptide, or 12 (in 10% of the molecules). The propeptide occupies 162–186 (MATLEEEEVKMQMQMPEAADLAAAA). Residue glutamate 207 is part of the active site. Positions 258-301 (VIPDMQKLGIKDKNEAARIVALVKNQTTAAAATAASADNDDDEA) are excised as a propeptide.

This sequence belongs to the ribosome-inactivating protein family. Type 1 RIP subfamily. As to quaternary structure, synthesized and stored in the kernel as a 34 kDa inactive precursor. During germination, this neutral precursor is converted into a basic, active form by limited proteolysis, which removes 25 AA of net charge -6 from the center of the polypeptide chain. Additional processing also occurs at the N- and C-termini of the polypeptide. A two-chain active RIP (comprised of 16.5 and 8.5 kDa fragments that remain tightly associated) is produced from this processing event.

The catalysed reaction is Endohydrolysis of the N-glycosidic bond at one specific adenosine on the 28S rRNA.. In terms of biological role, potent catalytic inactivator of eukaryotic protein synthesis. It may be a component of natural defense mechanisms involved in protecting the kernel against soil-borne fungal infections. This is Ribosome-inactivating protein from Zea mays (Maize).